Reading from the N-terminus, the 37-residue chain is Cytochrome b6-f complex subunit 5 (37 aa).

Residues 5 to 25 form a helical membrane-spanning segment; that stretch reads LLSGIVLGLIPVTLAGLFVTA.

Belongs to the PetG family. The 4 large subunits of the cytochrome b6-f complex are cytochrome b6, subunit IV (17 kDa polypeptide, PetD), cytochrome f and the Rieske protein, while the 4 small subunits are PetG, PetL, PetM and PetN. The complex functions as a dimer.

The protein localises to the plastid. It is found in the chloroplast thylakoid membrane. Functionally, component of the cytochrome b6-f complex, which mediates electron transfer between photosystem II (PSII) and photosystem I (PSI), cyclic electron flow around PSI, and state transitions. PetG is required for either the stability or assembly of the cytochrome b6-f complex. The protein is Cytochrome b6-f complex subunit 5 of Chlorokybus atmophyticus (Soil alga).